The sequence spans 467 residues: Glycogen synthase (467 aa).

Lysine 16 provides a ligand contact to ADP-alpha-D-glucose.

The protein belongs to the glycosyltransferase 1 family. Bacterial/plant glycogen synthase subfamily.

It catalyses the reaction [(1-&gt;4)-alpha-D-glucosyl](n) + ADP-alpha-D-glucose = [(1-&gt;4)-alpha-D-glucosyl](n+1) + ADP + H(+). The protein operates within glycan biosynthesis; glycogen biosynthesis. Functionally, synthesizes alpha-1,4-glucan chains using ADP-glucose. The polypeptide is Glycogen synthase (Paracoccus denitrificans (strain Pd 1222)).